The sequence spans 201 residues: Small ribosomal subunit protein uS4c (201 aa).

The segment at 20 to 39 (GLTRKTPKSGSNLKKKFHSG) is disordered. Residues 89 to 150 (MRLDNILFRL…NQRSKRLVQN (62 aa)) enclose the S4 RNA-binding domain.

It belongs to the universal ribosomal protein uS4 family. As to quaternary structure, part of the 30S ribosomal subunit. Contacts protein S5. The interaction surface between S4 and S5 is involved in control of translational fidelity.

The protein localises to the plastid. The protein resides in the chloroplast. In terms of biological role, one of the primary rRNA binding proteins, it binds directly to 16S rRNA where it nucleates assembly of the body of the 30S subunit. With S5 and S12 plays an important role in translational accuracy. This is Small ribosomal subunit protein uS4c (rps4) from Oryza nivara (Indian wild rice).